Here is a 470-residue protein sequence, read N- to C-terminus: Argininosuccinate lyase (470 aa).

Belongs to the lyase 1 family. Argininosuccinate lyase subfamily.

Its subcellular location is the cytoplasm. The enzyme catalyses 2-(N(omega)-L-arginino)succinate = fumarate + L-arginine. Its pathway is amino-acid biosynthesis; L-arginine biosynthesis; L-arginine from L-ornithine and carbamoyl phosphate: step 3/3. This is Argininosuccinate lyase from Prochlorococcus marinus (strain MIT 9303).